Reading from the N-terminus, the 566-residue chain is Oxygen-dependent choline dehydrogenase (566 aa).

7 to 36 lines the FAD pocket; the sequence is DYIICGAGSAGNVLATRLTEDPNVTVLLLE. Positions 183-203 are disordered; the sequence is QQEGFGPMDRTVTPKGRRAST. The active-site Proton acceptor is His-474.

It belongs to the GMC oxidoreductase family. The cofactor is FAD.

It catalyses the reaction choline + A = betaine aldehyde + AH2. It carries out the reaction betaine aldehyde + NAD(+) + H2O = glycine betaine + NADH + 2 H(+). It functions in the pathway amine and polyamine biosynthesis; betaine biosynthesis via choline pathway; betaine aldehyde from choline (cytochrome c reductase route): step 1/1. In terms of biological role, involved in the biosynthesis of the osmoprotectant glycine betaine. Catalyzes the oxidation of choline to betaine aldehyde and betaine aldehyde to glycine betaine at the same rate. In Burkholderia ambifaria (strain ATCC BAA-244 / DSM 16087 / CCUG 44356 / LMG 19182 / AMMD) (Burkholderia cepacia (strain AMMD)), this protein is Oxygen-dependent choline dehydrogenase.